The following is a 143-amino-acid chain: Late embryogenesis abundant protein 1 (143 aa).

Positions 1 to 17 (MSSQQNQNRQGEQQEQG) are enriched in low complexity. The segment at 1–143 (MSSQQNQNRQ…QAGEKVKGRD (143 aa)) is disordered. 4 repeat units span residues 47–57 (KTAEFRDSAGE), 69–79 (KGQEFKERAGE), 80–90 (KAEETKQRAGE), and 91–101 (KMDETKQRAGE). 2 stretches are compositionally biased toward basic and acidic residues: residues 47–60 (KTAEFRDSAGETIR) and 69–143 (KGQE…KGRD). The interval 47–101 (KTAEFRDSAGETIRDLTGQAQEKGQEFKERAGEKAEETKQRAGEKMDETKQRAGE) is 4 X 11 AA approximate repeats.

Belongs to the LEA type 4 family.

Its function is as follows. May be involved in defense against water stress. The sequence is that of Late embryogenesis abundant protein 1 from Aphelenchoides avenae (Mycophagous nematode worm).